The primary structure comprises 652 residues: Inactive leucine-rich repeat receptor-like serine/threonine-protein kinase At1g60630 (652 aa).

Residues 1–23 (MISSSSCMFFLVFAFFLISPVRS) form the signal peptide. Topologically, residues 24-256 (SDVEALLSLK…SRTKLIGIIS (233 aa)) are extracellular. 6 LRR repeats span residues 64–84 (SKLV…SLNQ), 85–108 (LDQL…LSGL), 109–132 (VNLK…LTSL), 134–156 (RLKT…LLRL), 158–178 (RLYT…PLNQ), and 179–203 (ATLR…ALNR). N-linked (GlcNAc...) asparagine glycans are attached at residues Asn72, Asn104, and Asn120. 3 N-linked (GlcNAc...) asparagine glycosylation sites follow: Asn185, Asn205, and Asn225. A helical transmembrane segment spans residues 257–277 (GSICGGILILLLTFLLICLLW). Topologically, residues 278–652 (RRKRSKSKRE…SLPREDHMSI (375 aa)) are cytoplasmic. The interval 286-321 (REERRSKRVAESKEAKTAETEEGTSDQKNKRFSWEK) is disordered. In terms of domain architecture, Protein kinase spans 350–624 (KASAETLGRG…VKDARAEAAL (275 aa)). Ser352 carries the phosphoserine modification. Residues 356 to 364 (LGRGTLGST) and Lys378 contribute to the ATP site. Phosphoserine occurs at positions 430 and 433. Position 509 is a phosphothreonine (Thr509). The interval 630–652 (SDHSPGRWSDTIQSLPREDHMSI) is disordered.

This sequence belongs to the protein kinase superfamily. Ser/Thr protein kinase family.

The protein resides in the cell membrane. This Arabidopsis thaliana (Mouse-ear cress) protein is Inactive leucine-rich repeat receptor-like serine/threonine-protein kinase At1g60630.